The sequence spans 444 residues: Citrate-proton symporter (444 aa).

At 1-41 the chain is on the cytoplasmic side; the sequence is MPTARCSMRASSTAPVRMMATAGGARIGAILRVTSGNFLEQ. Residues 42–62 form a helical membrane-spanning segment; that stretch reads FDFFLFGFYATYIAHTFFPAS. Over 63 to 72 the chain is Periplasmic; the sequence is SEFASLMMTF. The chain crosses the membrane as a helical span at residues 73–93; it reads AVFGAGFLMRPIGAIVLGAYI. Residues 94 to 114 lie on the Cytoplasmic side of the membrane; that stretch reads DKVGRRKGLIVTLSIMATGTF. The helical transmembrane segment at 115–135 threads the bilayer; it reads LIVLIPSYQTIGLWAPLLVLI. At 136–137 the chain is on the periplasmic side; sequence GR. A helical transmembrane segment spans residues 138–158; sequence LLQGFSAGAELGGVSVYLAEI. The Cytoplasmic segment spans residues 159–177; sequence ATPGRKGFYTSWQSGSQQV. Residues 178 to 198 form a helical membrane-spanning segment; it reads AIMVAAAMGFALNAVLEPSAI. Position 199 (Ser-199) is a topological domain, periplasmic. The chain crosses the membrane as a helical span at residues 200 to 220; it reads DWGWRIPFLFGVLIVPFIFIL. Residues 221–251 are Cytoplasmic-facing; it reads RRKLEETQEFTARRHHLAMRQVFATLLANWQ. Residues 252 to 272 traverse the membrane as a helical segment; that stretch reads VVIAGMMMVAMTTTAFYLITV. Topologically, residues 273–289 are periplasmic; sequence YAPTFGKKVLMLSASDS. Residues 290–310 form a helical membrane-spanning segment; that stretch reads LLVTLLVAISNFFWLPVGGAL. The Cytoplasmic segment spans residues 311-318; the sequence is SDRFGRRS. Residues 319-339 form a helical membrane-spanning segment; it reads VLIAMTLLALATAWPALTMLA. A topological domain (periplasmic) is located at residue Asn-340. Residues 341–361 traverse the membrane as a helical segment; sequence APSFLMMLSVLLWLSFIYGMY. Residues 362-379 lie on the Cytoplasmic side of the membrane; that stretch reads NGAMIPALTEIMPAEVRV. A helical membrane pass occupies residues 380-400; that stretch reads AGFSLAYSLATAVFGGFTPVI. Residues 401-411 are Periplasmic-facing; that stretch reads STALIEYTGDK. A helical membrane pass occupies residues 412 to 432; that stretch reads ASPGYWMSFAAICGLLATCYL. The Cytoplasmic portion of the chain corresponds to 433-444; that stretch reads YRRSAVALQTAR.

It belongs to the major facilitator superfamily. Metabolite:H+ Symporter (MHS) family (TC 2.A.1.6) family.

It localises to the cell inner membrane. Its function is as follows. Uptake of citrate across the boundary membrane with the concomitant transport of protons into the cell (symport system). This chain is Citrate-proton symporter (citH), found in Klebsiella pneumoniae.